Consider the following 254-residue polypeptide: Putative epimerase LsrE (254 aa).

Residues 14–34 form a helical membrane-spanning segment; that stretch reads VALLASYPLSVGILAGQWIAL. 3 residues coordinate a divalent metal cation: His50, Asp52, and His81. The active-site Proton acceptor is the Asp52. Substrate-binding positions include His81, 166-169, 199-201, and 221-222; these read GYGS, DGS, and GS. Asp199 provides a ligand contact to a divalent metal cation. Residue Asp199 is the Proton donor of the active site.

It belongs to the ribulose-phosphate 3-epimerase family. It depends on a divalent metal cation as a cofactor.

It is found in the cell membrane. The chain is Putative epimerase LsrE (lsrE) from Salmonella typhi.